Reading from the N-terminus, the 842-residue chain is Leucine--tRNA ligase (842 aa).

Residues Pro44 to His55 carry the 'HIGH' region motif. The 'KMSKS' region signature appears at Lys619–Ser623. Lys622 is a binding site for ATP.

It belongs to the class-I aminoacyl-tRNA synthetase family.

The protein resides in the cytoplasm. The catalysed reaction is tRNA(Leu) + L-leucine + ATP = L-leucyl-tRNA(Leu) + AMP + diphosphate. The protein is Leucine--tRNA ligase of Borrelia duttonii (strain Ly).